Reading from the N-terminus, the 517-residue chain is Squalene epoxidase 6 (517 aa).

2 helical membrane-spanning segments follow: residues Phe-3–Leu-23 and Ala-45–Ala-65. FAD contacts are provided by residues Val-55–Gly-56, Glu-75–Arg-76, Arg-83, Phe-88, Arg-156, Val-172, Asp-336, and Met-349. The helical transmembrane segment at Leu-447–Pro-467 threads the bilayer.

This sequence belongs to the squalene monooxygenase family. It depends on FAD as a cofactor. Expressed in seedlings, leaves, stems, inflorescences and siliques.

The protein localises to the membrane. It catalyses the reaction squalene + reduced [NADPH--hemoprotein reductase] + O2 = (S)-2,3-epoxysqualene + oxidized [NADPH--hemoprotein reductase] + H2O + H(+). It participates in terpene metabolism; lanosterol biosynthesis; lanosterol from farnesyl diphosphate: step 2/3. Catalyzes the stereospecific oxidation of squalene to (S)-2,3-epoxysqualene, and is considered to be a rate-limiting enzyme in steroid biosynthesis. The protein is Squalene epoxidase 6 (SQE6) of Arabidopsis thaliana (Mouse-ear cress).